A 509-amino-acid chain; its full sequence is Maturase K (509 aa).

The protein belongs to the intron maturase 2 family. MatK subfamily.

The protein localises to the plastid. It localises to the chloroplast. Functionally, usually encoded in the trnK tRNA gene intron. Probably assists in splicing its own and other chloroplast group II introns. This chain is Maturase K, found in Nicotiana acuminata (Acuminate tobacco).